The primary structure comprises 146 residues: Hemoglobin subunit beta-2 (146 aa).

The 145-residue stretch at Gly-2–His-146 folds into the Globin domain. The heme b site is built by His-63 and His-92.

It belongs to the globin family. As to quaternary structure, heterotetramer of two alpha chains and two beta chains. As to expression, red blood cells.

Its function is as follows. Involved in oxygen transport from the lung to the various peripheral tissues. In Xenopus borealis (Kenyan clawed frog), this protein is Hemoglobin subunit beta-2 (hbb2).